Here is a 242-residue protein sequence, read N- to C-terminus: Uridylate kinase (242 aa).

15–18 (KLSG) serves as a coordination point for ATP. Gly-57 contributes to the UMP binding site. Positions 58 and 62 each coordinate ATP. Residues Asp-78 and 139-146 (TGNPFFTT) each bind UMP. 3 residues coordinate ATP: Thr-166, Tyr-172, and Asp-175.

The protein belongs to the UMP kinase family. As to quaternary structure, homohexamer.

Its subcellular location is the cytoplasm. The catalysed reaction is UMP + ATP = UDP + ADP. Its pathway is pyrimidine metabolism; CTP biosynthesis via de novo pathway; UDP from UMP (UMPK route): step 1/1. Inhibited by UTP. Catalyzes the reversible phosphorylation of UMP to UDP. The polypeptide is Uridylate kinase (Acinetobacter baumannii (strain ATCC 17978 / DSM 105126 / CIP 53.77 / LMG 1025 / NCDC KC755 / 5377)).